A 303-amino-acid polypeptide reads, in one-letter code: Putative F-box protein At5g62060 (303 aa).

Residues 27–74 (KSRYIDIPLDITVEILKKLPAKSLVRFQCVSKQWSTIIGSRRDFIDSI) form the F-box domain.

This chain is Putative F-box protein At5g62060, found in Arabidopsis thaliana (Mouse-ear cress).